We begin with the raw amino-acid sequence, 102 residues long: Small ribosomal subunit protein uS10 (102 aa).

Belongs to the universal ribosomal protein uS10 family. As to quaternary structure, part of the 30S ribosomal subunit.

In terms of biological role, involved in the binding of tRNA to the ribosomes. This Geobacter sulfurreducens (strain ATCC 51573 / DSM 12127 / PCA) protein is Small ribosomal subunit protein uS10.